A 1597-amino-acid polypeptide reads, in one-letter code: Collagen alpha-1(XVII) chain (1597 aa).

Disordered regions lie at residues 1 to 155 (MDVT…PSTR) and 168 to 188 (GSRS…PIPK). At 1–468 (MDVTKKNKRD…CGSCCSWWKW (468 aa)) the chain is on the cytoplasmic side. The interval 1–567 (MDVTKKNKRD…AEQENGNLRG (567 aa)) is nonhelical region (NC16A). The segment covering 9–19 (RDGSEVTERII) has biased composition (basic and acidic residues). Polar residues-rich tracts occupy residues 58 to 96 (THGS…SPGS), 111 to 120 (EGSSSGNSSP), and 170 to 184 (RSAS…SNTL). Positions 146 to 231 (RLQSASPSTR…WSSTLPAGSS (86 aa)) are necessary for interaction with DST and for the recruitment of DST to hemidesmosome. The chain crosses the membrane as a helical; Signal-anchor for type II membrane protein span at residues 469-489 (LLGLLLTWLLLLGLLFGLIAL). At 490–1597 (AEEVRALKAR…KGGSWRLTSY (1108 aa)) the chain is on the extracellular side. Disordered stretches follow at residues 562–857 (NGNL…SSSS), 907–927 (LRGP…FRVR), 970–1041 (LETY…ISSS), 1289–1316 (TAGV…VSGA), and 1344–1394 (FIVG…SSMG). The tract at residues 568-1572 (SPGPKGDMGS…ELPLEEQPLA (1005 aa)) is triple-helical region. A compositionally biased stretch (low complexity) spans 604-632 (PKGQKGSVGEPGMEGPMGQRGREGPMGPR). Residues 665–674 (GPKGSGGSPG) are compositionally biased toward gly residues. Composition is skewed to low complexity over residues 730-748 (PGAV…AGPD) and 774-796 (DPGK…PGRP). The span at 820–838 (PGPPGPPGAMGPPGPPGAP) shows a compositional bias: pro residues. Over residues 847 to 857 (AGESFMGSSSS) the composition is skewed to low complexity. Composition is skewed to pro residues over residues 910-922 (PPGP…PPDL), 977-986 (PPGPPGPPGP), 1023-1035 (PGPP…PGPP), 1296-1310 (PGPP…PRGP), and 1348-1357 (PPGPPGPQGP). Over residues 1377-1393 (SSHSASVSRGSSYSSSM) the composition is skewed to low complexity. N1493 is a glycosylation site (N-linked (GlcNAc...) asparagine). The disordered stretch occupies residues 1531-1566 (GHPALEGTREKKETKVTKSMRGGEREASPSSHELPL). Residues 1537–1557 (GTREKKETKVTKSMRGGEREA) show a composition bias toward basic and acidic residues. Residues 1573 to 1597 (SVLAMAYGVHVKISPKGGSWRLTSY) are nonhelical region (NC1).

As to quaternary structure, homotrimers of alpha 1(XVII)chains. Interacts (via cytoplasmic region) with ITGB4 (via cytoplasmic region). Interacts (via cytoplasmic region) with DST (via N-terminus). Interacts (via N-terminus) with PLEC. Interacts (via cytoplasmic region) with DSP. The intracellular/endo domain is disulfide-linked. Post-translationally, prolines at the third position of the tripeptide repeating unit (G-X-Y) are hydroxylated in some or all of the chains. In terms of processing, the ectodomain is shedded from the surface of keratinocytes resulting in a 120-kDa soluble form, also named as 120 kDa linear IgA disease antigen homolog. The shedding is mediated by membrane-bound metalloproteases. Upper lamina lucidalhemidesmosome.

Its subcellular location is the cell junction. It is found in the hemidesmosome. The protein localises to the membrane. It localises to the secreted. The protein resides in the extracellular space. Its subcellular location is the extracellular matrix. It is found in the basement membrane. Its function is as follows. The 120 kDa linear IgA disease antigen homolog is an anchoring filament component involved in dermal-epidermal cohesion. The chain is Collagen alpha-1(XVII) chain (COL17A1) from Canis lupus familiaris (Dog).